The following is a 262-amino-acid chain: Small ribosomal subunit protein eS1 (262 aa).

The protein belongs to the eukaryotic ribosomal protein eS1 family. As to quaternary structure, component of the small ribosomal subunit. Mature ribosomes consist of a small (40S) and a large (60S) subunit. The 40S subunit contains about 33 different proteins and 1 molecule of RNA (18S). The 60S subunit contains about 49 different proteins and 3 molecules of RNA (25S, 5.8S and 5S).

Its subcellular location is the cytoplasm. In Plasmodium knowlesi (strain H), this protein is Small ribosomal subunit protein eS1.